The chain runs to 873 residues: MVANGHFFAGVGDVLDGKNYEHGVQVVDEEKEFNPNLSNYLTYENVTPAGFNYHLISVFGSQSTGKSTLLNSLFGTHFSVMSETERRQTTKGIWLSKNKGLKSDKGQDNQTKMADNILVMDVEGTDGRERGEDQDFERKSALFALATSEVLIVNIWEHQVGLYQGANMGLLKTVFEVNLELFLKDKRSNPRSLLFFVIRDFLGTTPLQNLQNTLLQDLNRIWNSLSKPAGLENSSITDYFDFAFAGLPHKNFQPEKFVDEVQKLSTRFCDGHRDPNKTDAKGTGSIEGGIFLPEYHRRIPADGFAVYAEGIWDQIVNNKDLDLPTQQELLAQFRCDEISREVLVAFDEAISPFEAKQAEAVQAGNPQVLGGLGSAMRNARMKSVKNFDTEASRYHKRVYQMKKSELQDKIDFRLKALFLGQLSAAHRSGIQEFTESVTAAVKAGQKRGASYDFAEIVKKERKLAIEKFEQEARATVVEDTQWSNYQQELSLYQKDLEIIGGQLRRDEMRRLATRVERWVRSRLGESIDLEFNAIGSGRSGSGAPEFGDKPSEKSLWDRVWTLFIDIVLDAERRFTERASSFDASIDEVDVGLWRLRRKSWGVLRAKIDEEMMEGNILLKLRENFEDKFRYDDAGVPRIWRPNDDIESIYTRARESTLTLIPLLSRFRLSETNAPPPLDKWIGHTPSSATPADEEDLTPIGGVDEDEGKSLEEEMTMIGEAKKQDLTVRFKKTADGVYVEAKRSAIGGITQVPLYFYGLLLALGWNEIVAVLRNPAYFLLLFVCAVTAYVTYQLNLWGPIIKMTEAASQQALMEGKRRLREFLEASDTGLQTMAMSEGRNAEGYDMSNMKNRKSAGGYQNNRSHIDDADDDDDF.

Over 1 to 750 (MVANGHFFAG…KRSAIGGITQ (750 aa)) the chain is Cytoplasmic. The region spanning 50–308 (GFNYHLISVF…IPADGFAVYA (259 aa)) is the GB1/RHD3-type G domain. A GTP-binding site is contributed by 60 to 67 (GSQSTGKS). The disordered stretch occupies residues 677–701 (LDKWIGHTPSSATPADEEDLTPIGG). The segment covering 691 to 701 (ADEEDLTPIGG) has biased composition (acidic residues). The chain crosses the membrane as a helical span at residues 751-771 (VPLYFYGLLLALGWNEIVAVL). The Lumenal segment spans residues 772–774 (RNP). A helical membrane pass occupies residues 775–795 (AYFLLLFVCAVTAYVTYQLNL). The Cytoplasmic portion of the chain corresponds to 796–873 (WGPIIKMTEA…IDDADDDDDF (78 aa)). Positions 841–873 (EGYDMSNMKNRKSAGGYQNNRSHIDDADDDDDF) are disordered.

It belongs to the TRAFAC class dynamin-like GTPase superfamily. GB1/RHD3 GTPase family. RHD3 subfamily.

Its subcellular location is the endoplasmic reticulum membrane. In terms of biological role, cooperates with the reticulon proteins and tubule-shaping DP1 family proteins to generate and maintain the structure of the tubular endoplasmic reticulum network. Has GTPase activity, which is required for its function in ER organization. The chain is Protein SEY1 from Paracoccidioides lutzii (strain ATCC MYA-826 / Pb01) (Paracoccidioides brasiliensis).